The primary structure comprises 340 residues: 4-hydroxy-2-oxovalerate aldolase (340 aa).

One can recognise a Pyruvate carboxyltransferase domain in the interval 5-255 (IVITEVALRD…QTGVDLYKMM (251 aa)). 13-14 (RD) contacts substrate. Asp-14 contributes to the Mn(2+) binding site. The Proton acceptor role is filled by His-17. Substrate contacts are provided by Ser-167 and His-194. 2 residues coordinate Mn(2+): His-194 and His-196. Position 285 (Tyr-285) interacts with substrate.

Belongs to the 4-hydroxy-2-oxovalerate aldolase family.

The catalysed reaction is (S)-4-hydroxy-2-oxopentanoate = acetaldehyde + pyruvate. The chain is 4-hydroxy-2-oxovalerate aldolase from Brevibacillus brevis (strain 47 / JCM 6285 / NBRC 100599).